The sequence spans 908 residues: Protein translocase subunit SecA (908 aa).

ATP-binding positions include Q87, 105 to 109, and D494; that span reads GEGKT. The tract at residues 871–908 is disordered; it reads QEFSGGNLNRSQSNGSSVTVTTSSGGGTERKTSRRRKR. Polar residues predominate over residues 874-884; that stretch reads SGGNLNRSQSN.

This sequence belongs to the SecA family. As to quaternary structure, monomer and homodimer. Part of the essential Sec protein translocation apparatus which comprises SecA, SecYEG and auxiliary proteins SecDF. Other proteins may also be involved.

The protein localises to the cell inner membrane. It is found in the cytoplasm. The catalysed reaction is ATP + H2O + cellular proteinSide 1 = ADP + phosphate + cellular proteinSide 2.. Functionally, part of the Sec protein translocase complex. Interacts with the SecYEG preprotein conducting channel. Has a central role in coupling the hydrolysis of ATP to the transfer of proteins into and across the cell membrane, serving as an ATP-driven molecular motor driving the stepwise translocation of polypeptide chains across the membrane. The chain is Protein translocase subunit SecA from Leptospira interrogans serogroup Icterohaemorrhagiae serovar Lai (strain 56601).